The sequence spans 408 residues: MDTSSEGDHELAPNDISFNTIPFSLNFHPTEDLLVVSDAEGRLKLFKYSLDENEVKLSLRPHQSGCRQANFSSDGKYIFTASSDCSMKVIDINTGSILYTREEAHDYPINCLVSKEFMVFTGDDEGTIKVWDMRQQNIVCEFQEHGDFISDITTIDDRHIAATSGDGGVSIYNFVRKSMDDISEKSDNELLSCLSLDNGQKLVCGSQDGSILIYDRNNLENVKKFAGHPQSVDALVKVNNNTFFSGSSDGIIRFIGLRPKKLLGVVGEHSTFPIERMAISRDNRYLGSISHDFSLKFWNVASFYEEDESEDADSANANANEIENDDDDDDDDDEIEDIENATKVDDDSGSEMGDDDDDDDDEEQEEEEESSSDEDIKRKKPQQNPIKAQQIEKQKQKQNQKRSFFKDL.

WD repeat units lie at residues 17-56, 61-100, 104-141, 144-183, 186-224, 227-265, and 268-308; these read SFNTIPFSLNFHPTEDLLVVSDAEGRLKLFKYSLDENEVK, PHQSGCRQANFSSDGKYIFTASSDCSMKVIDINTGSILYT, AHDYPINCLVSKEFMVFTGDDEGTIKVWDMRQQNIVCE, EHGDFISDITTIDDRHIAATSGDGGVSIYNFVRKSMDDIS, SDNELLSCLSLDNGQKLVCGSQDGSILIYDRNNLENVKK, GHPQSVDALVKVNNNTFFSGSSDGIIRFIGLRPKKLLGV, and EHST…EEDE. The segment at 308-408 is disordered; that stretch reads ESEDADSANA…NQKRSFFKDL (101 aa). Acidic residues-rich tracts occupy residues 322-339 and 347-373; these read IENDDDDDDDDDEIEDIE and DSGSEMGDDDDDDDDEEQEEEEESSSD.

Belongs to the WD repeat WDR55 family.

The sequence is that of WD repeat-containing protein 55 homolog (wdr55) from Dictyostelium discoideum (Social amoeba).